Consider the following 501-residue polypeptide: ATP-dependent rRNA helicase RRP3 (501 aa).

Residues 3-44 are a coiled coil; the sequence is KIVKRKEKKANDELTSLAEKIRAKALENQKKLIEAEKEGGSE. Positions 36–79 are disordered; the sequence is EAEKEGGSESDSEEDATAEKKKVLKSKSKSTVSTQNENTNEDES. Phosphoserine occurs at positions 43, 45, and 47. A Q motif motif is present at residues 81 to 109; the sequence is ESFSELNLVPELIQACKNLNYSKPTPIQS. The Helicase ATP-binding domain maps to 112-284; it reads IPPALEGHDI…RASLTNPVKC (173 aa). 125-132 is an ATP binding site; it reads AQTGSGKT. Positions 231–234 match the DEAD box motif; sequence DEAD. The region spanning 307 to 461 is the Helicase C-terminal domain; it reads LKNTYLIYLL…NIILTLRDSV (155 aa). The tract at residues 480–501 is disordered; the sequence is IARGKGRRGRMMTRENMDMGER. The segment covering 491-501 has biased composition (basic and acidic residues); the sequence is MTRENMDMGER.

This sequence belongs to the DEAD box helicase family. DDX47/RRP3 subfamily. As to quaternary structure, interacts with the SSU processome.

The protein localises to the nucleus. It catalyses the reaction ATP + H2O = ADP + phosphate + H(+). With respect to regulation, ATPase activity is stimulated upon the addition of RNA. Its function is as follows. ATP-dependent rRNA helicase required for pre-ribosomal RNA processing. Involved in the maturation of the 35S-pre-rRNA and to its cleavage to mature 18S rRNA. In Saccharomyces cerevisiae (strain ATCC 204508 / S288c) (Baker's yeast), this protein is ATP-dependent rRNA helicase RRP3.